The primary structure comprises 184 residues: Photosystem I assembly protein Ycf4 (184 aa).

2 consecutive transmembrane segments (helical) span residues 19 to 39 and 57 to 77; these read ISNF…LLVG and IVFF…LFIS.

The protein belongs to the Ycf4 family.

The protein resides in the plastid. It is found in the chloroplast thylakoid membrane. In terms of biological role, seems to be required for the assembly of the photosystem I complex. The chain is Photosystem I assembly protein Ycf4 from Nicotiana tomentosiformis (Tobacco).